Consider the following 204-residue polypeptide: uncharacterized protein (204 aa).

This is an uncharacterized protein from Stylonychia lemnae (Ciliate).